A 103-amino-acid polypeptide reads, in one-letter code: MKSLVLLAILAALAVVTLCYESHESMESYELNPFINRRNANIFISPQQRWRAKVQERIRERSKPVHELNREACDDYRLCERYAMVYGYNAAYNRYFRERRGAK.

The signal sequence occupies residues 1 to 19 (MKSLVLLAILAALAVVTLC). Position 21 is a 4-carboxyglutamate (glutamate 21). Serine 22, serine 25, and serine 28 each carry phosphoserine. The Gla domain maps to 51–97 (RAKVQERIRERSKPVHELNREACDDYRLCERYAMVYGYNAAYNRYFR). 4-carboxyglutamate is present on residues glutamate 56, glutamate 60, glutamate 67, and glutamate 71. Cysteine 73 and cysteine 79 are oxidised to a cystine. The propeptide at 97–103 (RERRGAK) is removed in mature form; probably by carboxypeptidase N.

Belongs to the osteocalcin/matrix Gla protein family. In terms of processing, requires vitamin K-dependent gamma-carboxylation for its function.

It localises to the secreted. Its function is as follows. Associates with the organic matrix of bone and cartilage. Thought to act as an inhibitor of bone formation. The sequence is that of Matrix Gla protein (MGP) from Pongo abelii (Sumatran orangutan).